The sequence spans 409 residues: Magnesium-protoporphyrin IX monomethyl ester [oxidative] cyclase, chloroplastic (409 aa).

Disordered regions lie at residues 1–23 (MAAEMALVKPISKFSSPKLSNPS) and 36–60 (RMSASSSPPPPTTATSKSKKGTKKE). Residues 1 to 36 (MAAEMALVKPISKFSSPKLSNPSKFLSGRRFSTVIR) constitute a chloroplast transit peptide. Residues 13–23 (KFSSPKLSNPS) are compositionally biased toward polar residues.

This sequence belongs to the AcsF family. Part of the FLU-containing chloroplast membrane complex composed of FLU, CRD1, PORB, PORC, CHLP and HEMA1. Interacts with YCF54 in chloroplasts. The cofactor is Fe cation.

It localises to the plastid. The protein resides in the chloroplast inner membrane. It is found in the chloroplast thylakoid membrane. It catalyses the reaction Mg-protoporphyrin IX 13-monomethyl ester + 3 NADPH + 3 O2 + 2 H(+) = 3,8-divinyl protochlorophyllide a + 3 NADP(+) + 5 H2O. It participates in porphyrin-containing compound metabolism; chlorophyll biosynthesis. Functionally, catalytic component of the MgProto monomethylester (MgProtoME) cyclase complex that catalyzes the formation of the isocyclic ring in chlorophyll biosynthesis. Mediates the cyclase reaction, which results in the formation of divinylprotochlorophyllide (Pchlide) characteristic of all chlorophylls from magnesium-protoporphyrin IX 13-monomethyl ester (MgPMME). The sequence is that of Magnesium-protoporphyrin IX monomethyl ester [oxidative] cyclase, chloroplastic from Arabidopsis thaliana (Mouse-ear cress).